The following is a 187-amino-acid chain: Adenylate kinase (187 aa).

Residue 10–15 (GSGKGT) participates in ATP binding. The interval 30 to 59 (STGDLLRSEVVAGTPLGLQAKQVMAQGDLV) is NMP. AMP is bound by residues T31, R36, 57–59 (DLV), 85–88 (GYPR), and Q92. The LID stretch occupies residues 126–136 (GRAQAEGREDD). Residue R127 coordinates ATP. Residues R133 and R144 each contribute to the AMP site. G172 is a binding site for ATP.

Belongs to the adenylate kinase family. As to quaternary structure, monomer.

It is found in the cytoplasm. It carries out the reaction AMP + ATP = 2 ADP. It functions in the pathway purine metabolism; AMP biosynthesis via salvage pathway; AMP from ADP: step 1/1. In terms of biological role, catalyzes the reversible transfer of the terminal phosphate group between ATP and AMP. Plays an important role in cellular energy homeostasis and in adenine nucleotide metabolism. This chain is Adenylate kinase, found in Xylella fastidiosa (strain 9a5c).